The following is a 101-amino-acid chain: Apolipoprotein C-II (101 aa).

Residues 1–22 (MGTRCLLVLLLVLLVLKCEVQG) form the signal peptide. A propeptide spans 23-28 (DDMARQ) (removed in mature form). Residues 66 to 74 (AMDEKIRDM) form a lipid binding region. Residues 78–101 (STAAVRIYTGILTDQILSMLTGDP) form a lipoprotein lipase cofactor region.

Belongs to the apolipoprotein C2 family. Proapolipoprotein C-II is synthesized as a sialic acid containing glycoprotein which is subsequently desialylated prior to its proteolytic processing. Post-translationally, proapolipoprotein C-II, the major form found in plasma undergoes proteolytic cleavage of its N-terminal hexapeptide to generate the mature form apolipoprotein C-II, which occurs as the minor form in plasma.

Its subcellular location is the secreted. Its function is as follows. Component of chylomicrons, very low-density lipoproteins (VLDL), low-density lipoproteins (LDL), and high-density lipoproteins (HDL) in plasma. Plays an important role in lipoprotein metabolism as an activator of lipoprotein lipase, the enzyme which hydrolyzes the triacylglycerols on chylomicrons and VLDL. This Panthera tigris altaica (Siberian tiger) protein is Apolipoprotein C-II (APOC2).